We begin with the raw amino-acid sequence, 227 residues long: MAHPVQLGLQDATSPVMEELVTFHDHALMAMFLISFLILYALSATLTTKLTNTNITDAQEMETIWTILPAVILVLIALPSLRILYMTDEINNPSFTIKSIGHQWYWTYEYTDYGGLIFNSYMLPPLFLNPGDLRLLEVDNRVVLPIEAPVRMMITSQDVLHSWTIPTLGLKTDAVPGRLNQTVFTATRPGVYYGQCSEICGANHSFMPIVAELIPLKIFEMGPVFTL.

The Mitochondrial intermembrane portion of the chain corresponds to 1-14 (MAHPVQLGLQDATS). A helical membrane pass occupies residues 15–45 (PVMEELVTFHDHALMAMFLISFLILYALSAT). Residues 46-59 (LTTKLTNTNITDAQ) lie on the Mitochondrial matrix side of the membrane. A helical transmembrane segment spans residues 60-87 (EMETIWTILPAVILVLIALPSLRILYMT). Residues 88–227 (DEINNPSFTI…IFEMGPVFTL (140 aa)) lie on the Mitochondrial intermembrane side of the membrane. Histidine 161, cysteine 196, glutamate 198, cysteine 200, histidine 204, and methionine 207 together coordinate Cu cation. Residue glutamate 198 coordinates Mg(2+).

This sequence belongs to the cytochrome c oxidase subunit 2 family. Component of the cytochrome c oxidase (complex IV, CIV), a multisubunit enzyme composed of 14 subunits. The complex is composed of a catalytic core of 3 subunits MT-CO1, MT-CO2 and MT-CO3, encoded in the mitochondrial DNA, and 11 supernumerary subunits COX4I, COX5A, COX5B, COX6A, COX6B, COX6C, COX7A, COX7B, COX7C, COX8 and NDUFA4, which are encoded in the nuclear genome. The complex exists as a monomer or a dimer and forms supercomplexes (SCs) in the inner mitochondrial membrane with NADH-ubiquinone oxidoreductase (complex I, CI) and ubiquinol-cytochrome c oxidoreductase (cytochrome b-c1 complex, complex III, CIII), resulting in different assemblies (supercomplex SCI(1)III(2)IV(1) and megacomplex MCI(2)III(2)IV(2)). Found in a complex with TMEM177, COA6, COX18, COX20, SCO1 and SCO2. Interacts with TMEM177 in a COX20-dependent manner. Interacts with COX20. Interacts with COX16. Cu cation serves as cofactor.

Its subcellular location is the mitochondrion inner membrane. The enzyme catalyses 4 Fe(II)-[cytochrome c] + O2 + 8 H(+)(in) = 4 Fe(III)-[cytochrome c] + 2 H2O + 4 H(+)(out). Its function is as follows. Component of the cytochrome c oxidase, the last enzyme in the mitochondrial electron transport chain which drives oxidative phosphorylation. The respiratory chain contains 3 multisubunit complexes succinate dehydrogenase (complex II, CII), ubiquinol-cytochrome c oxidoreductase (cytochrome b-c1 complex, complex III, CIII) and cytochrome c oxidase (complex IV, CIV), that cooperate to transfer electrons derived from NADH and succinate to molecular oxygen, creating an electrochemical gradient over the inner membrane that drives transmembrane transport and the ATP synthase. Cytochrome c oxidase is the component of the respiratory chain that catalyzes the reduction of oxygen to water. Electrons originating from reduced cytochrome c in the intermembrane space (IMS) are transferred via the dinuclear copper A center (CU(A)) of subunit 2 and heme A of subunit 1 to the active site in subunit 1, a binuclear center (BNC) formed by heme A3 and copper B (CU(B)). The BNC reduces molecular oxygen to 2 water molecules using 4 electrons from cytochrome c in the IMS and 4 protons from the mitochondrial matrix. The polypeptide is Cytochrome c oxidase subunit 2 (MT-CO2) (Theropithecus gelada (Gelada baboon)).